The chain runs to 116 residues: Large ribosomal subunit protein uL18 (116 aa).

It belongs to the universal ribosomal protein uL18 family. Part of the 50S ribosomal subunit; part of the 5S rRNA/L5/L18/L25 subcomplex. Contacts the 5S and 23S rRNAs.

Functionally, this is one of the proteins that bind and probably mediate the attachment of the 5S RNA into the large ribosomal subunit, where it forms part of the central protuberance. This Pseudomonas putida (strain W619) protein is Large ribosomal subunit protein uL18.